The sequence spans 343 residues: Aspartate carbamoyltransferase catalytic subunit (343 aa).

Residues Arg54 and Thr55 each coordinate carbamoyl phosphate. Position 82 (Lys82) interacts with L-aspartate. Residues Arg104, His134, and Gln137 each contribute to the carbamoyl phosphate site. The L-aspartate site is built by Arg177 and Arg232. 2 residues coordinate carbamoyl phosphate: Gly277 and Pro278. Positions 323–343 (PDQSNPQRNVTNTSNWQETKR) are disordered.

This sequence belongs to the aspartate/ornithine carbamoyltransferase superfamily. ATCase family. As to quaternary structure, heterododecamer (2C3:3R2) of six catalytic PyrB chains organized as two trimers (C3), and six regulatory PyrI chains organized as three dimers (R2).

It catalyses the reaction carbamoyl phosphate + L-aspartate = N-carbamoyl-L-aspartate + phosphate + H(+). Its pathway is pyrimidine metabolism; UMP biosynthesis via de novo pathway; (S)-dihydroorotate from bicarbonate: step 2/3. In terms of biological role, catalyzes the condensation of carbamoyl phosphate and aspartate to form carbamoyl aspartate and inorganic phosphate, the committed step in the de novo pyrimidine nucleotide biosynthesis pathway. This chain is Aspartate carbamoyltransferase catalytic subunit, found in Renibacterium salmoninarum (strain ATCC 33209 / DSM 20767 / JCM 11484 / NBRC 15589 / NCIMB 2235).